The chain runs to 364 residues: DNA replication and repair protein RecF (364 aa).

Position 30–37 (30–37) interacts with ATP; the sequence is GENGSGKT.

It belongs to the RecF family.

It localises to the cytoplasm. The RecF protein is involved in DNA metabolism; it is required for DNA replication and normal SOS inducibility. RecF binds preferentially to single-stranded, linear DNA. It also seems to bind ATP. This Xylella fastidiosa (strain M12) protein is DNA replication and repair protein RecF.